Here is a 593-residue protein sequence, read N- to C-terminus: CTD kinase subunit alpha (593 aa).

2 stretches are compositionally biased toward polar residues: residues 1 to 17 and 29 to 51; these read MSYSKSTIYRRQGTEPN and QLSGTNEESLGGHTLSSNAFKNN. The segment at 1–262 is disordered; the sequence is MSYSKSTIYR…ESVPAPLPSP (262 aa). Residues Ser-56 and Ser-58 each carry the phosphoserine modification. Positions 90–103 are enriched in basic residues; the sequence is RSRKSRRRKGKKAF. Phosphoserine is present on residues Ser-104 and Ser-109. Over residues 139–152 the composition is skewed to low complexity; it reads SSSSASVSPISPSA. Residues 160 to 170 are compositionally biased toward polar residues; sequence QASSFRRSPPS. Residues 198–215 show a composition bias toward low complexity; that stretch reads IPHETTSSDTQKKSSVSS. A Protein kinase domain is found at 277–561; it reads YEKIDQIGEG…AHETLMHEYF (285 aa). ATP-binding positions include 283–291 and Lys-306; that span reads IGEGTYGKV. Asp-399 serves as the catalytic Proton acceptor.

It belongs to the protein kinase superfamily. CMGC Ser/Thr protein kinase family. CDC2/CDKX subfamily. As to quaternary structure, CTDK-I consists of three subunits, ctk1/lsk1, ctk2/lsc1 and ctk3 (also called alpha, beta and gamma). Interacts with ctk2/lsc1. This interaction is dependent on kinase activity.

The protein localises to the nucleus. It localises to the nucleolus. The catalysed reaction is [DNA-directed RNA polymerase] + ATP = phospho-[DNA-directed RNA polymerase] + ADP + H(+). Functionally, catalytic subunit of the CTDK-I complex, which hyperphosphorylates the C-terminal heptapeptide repeat domain (CTD) of the largest RNA polymerase II subunit. Involved in RNA polymerase II transcriptional elongation and pre-mRNA 3'-end processing. Together with ctk2/lsc1, required for the regulation of cytokinesis by phosphorylating 'Ser-2' residues found in the heptad repeats of the CTD. Required for nuclear localization of ctk2/lsc1. Positively regulates the septation initiation network (SIN) and promotes successful completion of cytokinesis in response to perturbation of the actomyosin ring. Acts in parallel to clp1 to promote actomyosin ring stability upon cytokinesis checkpoint activation. This is CTD kinase subunit alpha from Schizosaccharomyces pombe (strain 972 / ATCC 24843) (Fission yeast).